A 298-amino-acid polypeptide reads, in one-letter code: Bifunctional protein FolD (298 aa).

Residues 165–167 (GRS), S190, and I231 contribute to the NADP(+) site.

It belongs to the tetrahydrofolate dehydrogenase/cyclohydrolase family. In terms of assembly, homodimer.

The enzyme catalyses (6R)-5,10-methylene-5,6,7,8-tetrahydrofolate + NADP(+) = (6R)-5,10-methenyltetrahydrofolate + NADPH. The catalysed reaction is (6R)-5,10-methenyltetrahydrofolate + H2O = (6R)-10-formyltetrahydrofolate + H(+). It functions in the pathway one-carbon metabolism; tetrahydrofolate interconversion. Functionally, catalyzes the oxidation of 5,10-methylenetetrahydrofolate to 5,10-methenyltetrahydrofolate and then the hydrolysis of 5,10-methenyltetrahydrofolate to 10-formyltetrahydrofolate. This Prochlorococcus marinus (strain MIT 9312) protein is Bifunctional protein FolD.